A 345-amino-acid chain; its full sequence is tRNA N6-adenosine threonylcarbamoyltransferase (345 aa).

His-113 and His-117 together coordinate Fe cation. Substrate is bound by residues 142-146, Asp-175, Gly-188, Asp-192, and Asn-282; that span reads AISGG. Asp-310 contributes to the Fe cation binding site.

The protein belongs to the KAE1 / TsaD family. Fe(2+) serves as cofactor.

The protein localises to the cytoplasm. It carries out the reaction L-threonylcarbamoyladenylate + adenosine(37) in tRNA = N(6)-L-threonylcarbamoyladenosine(37) in tRNA + AMP + H(+). Functionally, required for the formation of a threonylcarbamoyl group on adenosine at position 37 (t(6)A37) in tRNAs that read codons beginning with adenine. Is involved in the transfer of the threonylcarbamoyl moiety of threonylcarbamoyl-AMP (TC-AMP) to the N6 group of A37, together with TsaE and TsaB. TsaD likely plays a direct catalytic role in this reaction. In Bdellovibrio bacteriovorus (strain ATCC 15356 / DSM 50701 / NCIMB 9529 / HD100), this protein is tRNA N6-adenosine threonylcarbamoyltransferase.